The sequence spans 413 residues: MTATSLWELAERARKRLSEIAKGNRDRALLAMADLLEARWEEVLRANREDLEEAERTGLPKAKLDRLALKEKDLKTLTEGLRQIARLPDPLGRIEGLAKRPNGLRVGRMRVPLGLIGFIYEARPGATVEAVSVALKAGNAMLLRGGKEAFRSNRALVALWHEALEEAGLPEEAVTLVPTTDREAVLEMCRLELLDLLIPRGGEELIRLVQQEARVPVLAHAKGVNHLYVDEKADLSMALRLALNGKTQRPAVCNALEAVLVHEKVAEAFLPRLEKAMREKGVELRACPRALPLLKEAVPAREDEWDREYLDLVLRVKVVSGLEEALAHIARYGSRHTEAICTEDPKAAWRFLEEVDASLVLWNASTRFNDGFELGLGAEIGISTSKLHAYGPMGPLELTTLKWVALGEGQERT.

This sequence belongs to the gamma-glutamyl phosphate reductase family.

The protein resides in the cytoplasm. The enzyme catalyses L-glutamate 5-semialdehyde + phosphate + NADP(+) = L-glutamyl 5-phosphate + NADPH + H(+). It functions in the pathway amino-acid biosynthesis; L-proline biosynthesis; L-glutamate 5-semialdehyde from L-glutamate: step 2/2. Functionally, catalyzes the NADPH-dependent reduction of L-glutamate 5-phosphate into L-glutamate 5-semialdehyde and phosphate. The product spontaneously undergoes cyclization to form 1-pyrroline-5-carboxylate. This Thermus thermophilus (strain ATCC BAA-163 / DSM 7039 / HB27) protein is Gamma-glutamyl phosphate reductase.